A 157-amino-acid polypeptide reads, in one-letter code: Small ribosomal subunit protein uS7 (157 aa).

This sequence belongs to the universal ribosomal protein uS7 family. In terms of assembly, part of the 30S ribosomal subunit. Contacts proteins S9 and S11.

One of the primary rRNA binding proteins, it binds directly to 16S rRNA where it nucleates assembly of the head domain of the 30S subunit. Is located at the subunit interface close to the decoding center, probably blocks exit of the E-site tRNA. The protein is Small ribosomal subunit protein uS7 of Verminephrobacter eiseniae (strain EF01-2).